A 718-amino-acid chain; its full sequence is Sec-independent protein translocase protein TatCt (718 aa).

Helical transmembrane passes span 34-54, 84-104, 137-157, 178-198, 214-231, 234-254, 280-300, and 325-345; these read VFIVFLVGFLGTFYALRLYVW, ILLQAKIGLVVGVLFALPPFI, LFAAGVAYGYFVFFPFTFAFL, FIFLLTLSFGLASQLPLAMTG, WRHAIVGIFAFGALFTPP, FTQIMWAVPVILLYAFSLYLA, LAGVGVVVGLLVYAFYEYGGV, and LGAFVVAGGFVGLAFGLAYLV. Positions 421-451 are disordered; sequence REAEAADAEDEPGELEDRTTRAGGAFVSELT. The span at 425–434 shows a compositional bias: acidic residues; it reads AADAEDEPGE. 6 helical membrane-spanning segments follow: residues 478–498, 539–559, 572–592, 621–641, 661–681, and 682–702; these read AFWVVGWFMLVLATTFGWLYT, FSTILAVLATLPLVAYFVWPA, TVFVWTGALAGGLLGGFALGY, FFWLIFFTTAGIGLLADVPIL, EVTVFILAISAVFTPASITTM, and FMVTLPLMAAYGVGLGVLFVL.

It belongs to the TatC family. Forms a complex with TatA.

Its subcellular location is the cell membrane. Its function is as follows. Part of the twin-arginine translocation (Tat) system that transports large folded proteins containing a characteristic twin-arginine motif in their signal peptide across membranes. This chain is Sec-independent protein translocase protein TatCt, found in Haloferax volcanii (strain ATCC 29605 / DSM 3757 / JCM 8879 / NBRC 14742 / NCIMB 2012 / VKM B-1768 / DS2) (Halobacterium volcanii).